A 236-amino-acid polypeptide reads, in one-letter code: MTGYEAWLITFGTWMYSVNKEQLARAGFYAIGQEDKIQCFHCGGGLANWKPKEDPWEQHAKWYPGCKYLLEEKGHEYINNIHLTRSLEGALVQTTKKTPSLTKRISDTIFPNPMLQEAIRMGFDFKDIKKIMEEKIQTSGSNYKTLEVLVADLVSAQKDTTENESNQTSLQREISPEEPLRRLQEEKLCKICMDRHIAVVFIPCGHLVTCKQCAEAVDRCPMCNAVIDFKQRVFMS.

Residues 7-70 (WLITFGTWMY…KWYPGCKYLL (64 aa)) form a BIR repeat. Zn(2+)-binding residues include C39, C42, H59, and C66. The segment at 189 to 224 (CKICMDRHIAVVFIPCGHLVTCKQCAEAVDRCPMCN) adopts an RING-type zinc-finger fold.

This sequence belongs to the IAP family. Binds to caspase-9.

It is found in the cytoplasm. In terms of biological role, protects against apoptosis mediated by BAX. This Gorilla gorilla gorilla (Western lowland gorilla) protein is Baculoviral IAP repeat-containing protein 8 (BIRC8).